Consider the following 152-residue polypeptide: Ribonuclease H (152 aa).

One can recognise an RNase H type-1 domain in the interval 1 to 142 (MGSKVVIYTD…ADKLAVQGRE (142 aa)). Mg(2+) is bound by residues Asp-10, Glu-48, Asp-70, and Asp-134.

This sequence belongs to the RNase H family. As to quaternary structure, monomer. Mg(2+) serves as cofactor.

It localises to the cytoplasm. It catalyses the reaction Endonucleolytic cleavage to 5'-phosphomonoester.. Its function is as follows. Endonuclease that specifically degrades the RNA of RNA-DNA hybrids. This is Ribonuclease H from Rickettsia massiliae (strain Mtu5).